Here is a 187-residue protein sequence, read N- to C-terminus: COMM domain-containing protein 1 (187 aa).

The COMM domain occupies 112–186 (SLQKISWRID…SIQKHLQAKS (75 aa)).

The protein belongs to the COMM domain-containing protein 1 family. Component of the commander complex consisting of the CCC subcomplex and the retriever subcomplex.

Functionally, scaffold protein in the commander complex that is essential for endosomal recycling of transmembrane cargos; the commander complex is composed of the CCC subcomplex and the retriever subcomplex. The protein is COMM domain-containing protein 1 (commd1) of Dictyostelium discoideum (Social amoeba).